The following is a 477-amino-acid chain: Aspartyl/glutamyl-tRNA(Asn/Gln) amidotransferase subunit B (477 aa).

Belongs to the GatB/GatE family. GatB subfamily. In terms of assembly, heterotrimer of A, B and C subunits.

The catalysed reaction is L-glutamyl-tRNA(Gln) + L-glutamine + ATP + H2O = L-glutaminyl-tRNA(Gln) + L-glutamate + ADP + phosphate + H(+). It carries out the reaction L-aspartyl-tRNA(Asn) + L-glutamine + ATP + H2O = L-asparaginyl-tRNA(Asn) + L-glutamate + ADP + phosphate + 2 H(+). Functionally, allows the formation of correctly charged Asn-tRNA(Asn) or Gln-tRNA(Gln) through the transamidation of misacylated Asp-tRNA(Asn) or Glu-tRNA(Gln) in organisms which lack either or both of asparaginyl-tRNA or glutaminyl-tRNA synthetases. The reaction takes place in the presence of glutamine and ATP through an activated phospho-Asp-tRNA(Asn) or phospho-Glu-tRNA(Gln). The chain is Aspartyl/glutamyl-tRNA(Asn/Gln) amidotransferase subunit B from Legionella pneumophila (strain Lens).